Reading from the N-terminus, the 278-residue chain is Tumor necrosis factor ligand superfamily member 6 (278 aa).

Over 1–77 the chain is Cytoplasmic; it reads MQQPVNYPCP…SPLKKKDNIE (77 aa). The segment at 26-68 is disordered; that stretch reads PGSVFSCPSSGPRGPGQRRPPPPPPPPSPLPPPSQPPPLPPLS. Residues 33 to 42 show a composition bias toward low complexity; that stretch reads PSSGPRGPGQ. Residues 43 to 68 show a composition bias toward pro residues; sequence RRPPPPPPPPSPLPPPSQPPPLPPLS. A helical; Signal-anchor for type II membrane protein membrane pass occupies residues 78–99; the sequence is LWLPVIFFMVLVALVGMGLGMY. Residues 100-278 lie on the Extracellular side of the membrane; that stretch reads QLFHLQKELA…SKTFFGLYKL (179 aa). Residue Asn-116 is glycosylated (N-linked (GlcNAc...) asparagine). The segment covering 125 to 135 has biased composition (polar residues); sequence EKQIANPSTPS. Residues 125–147 are disordered; sequence EKQIANPSTPSETKKPRSVAHLT. A THD domain is found at 142–278; the sequence is SVAHLTGNPR…SKTFFGLYKL (137 aa). Residues Cys-199 and Cys-230 are joined by a disulfide bond. Residues Asn-247 and Asn-257 are each glycosylated (N-linked (GlcNAc...) asparagine).

It belongs to the tumor necrosis factor family. Homotrimer. Interacts with ARHGAP9, BAIAP2L1, BTK, CACNB3, CACNB4, CRK, DLG2, DNMBP, DOCK4, EPS8L3, FGR, FYB1, FYN, HCK, ITK, ITSN2, KALRN, LYN, MACC1, MIA, MPP4, MYO15A, NCF1, NCK1, NCK2, NCKIPSD, OSTF1, PIK3R1, PSTPIP1, RIMBP3C, SAMSN1, SH3GL3, SH3PXD2B, SH3PXD2A, SH3RF2, SKAP2, SNX33, SNX9, SORBS3, SPTA1, SRC, SRGAP1, SRGAP2, SRGAP3, TEC, TJP3 and YES1. Post-translationally, the soluble form derives from the membrane form by proteolytic processing. The membrane-bound form undergoes two successive intramembrane proteolytic cleavages. The first one is processed by ADAM10 producing an N-terminal fragment, which lacks the receptor-binding extracellular domain. This ADAM10-processed FasL (FasL APL) remnant form is still membrane anchored and further processed by SPPL2A that liberates the FasL intracellular domain (FasL ICD). FasL shedding by ADAM10 is a prerequisite for subsequent intramembrane cleavage by SPPL2A in T-cells. Phosphorylated by FGR on tyrosine residues; this is required for ubiquitination and subsequent internalization. In terms of processing, N-glycosylated. Post-translationally, monoubiquitinated. Expressed in activated splenocytes and thymocytes. Moderate or weak expression found in small intestines, kidney and lung.

It is found in the cell membrane. Its subcellular location is the cytoplasmic vesicle lumen. The protein resides in the lysosome lumen. The protein localises to the secreted. It localises to the nucleus. In terms of biological role, cytokine that binds to TNFRSF6/FAS, a receptor that transduces the apoptotic signal into cells. Involved in cytotoxic T-cell-mediated apoptosis, natural killer cell-mediated apoptosis and in T-cell development. Initiates fratricidal/suicidal activation-induced cell death (AICD) in antigen-activated T-cells contributing to the termination of immune responses. TNFRSF6/FAS-mediated apoptosis also has a role in the induction of peripheral tolerance. Binds to TNFRSF6B/DcR3, a decoy receptor that blocks apoptosis. Its function is as follows. Induces FAS-mediated activation of NF-kappa-B, initiating non-apoptotic signaling pathways. Can induce apoptosis but does not appear to be essential for this process. Functionally, cytoplasmic form induces gene transcription inhibition. The sequence is that of Tumor necrosis factor ligand superfamily member 6 (Faslg) from Rattus norvegicus (Rat).